Consider the following 1621-residue polypeptide: ABC transporter A family member 2 (1621 aa).

The next 7 membrane-spanning stretches (helical) occupy residues 30–50 (ILFPIIVILVIFAILVLVMAF), 234–254 (SVFITAALMIFGFRLITDLVI), 276–296 (ISWMITSLVTALPVNLIISII), 309–329 (GVVIFTLILYLLTLLLLAFIL), 338–358 (FCGLLSFVIIIAINIGGIFVA), 365–385 (GAKLFLCLISPIAIACSIFAM), and 405–425 (NQVIGMLVLDIFFYIFLVWYL). One can recognise an ABC transporter 1 domain in the interval 484 to 717 (ISIRNLRKEY…FGCGYLLTCS (234 aa)). 520-527 (GPNGSGKS) provides a ligand contact to ATP. The next 7 helical transmembrane spans lie at 856–876 (FFLTLVIPLVFIIGSIIMYKA), 1033–1053 (IVYFIIIMMAGYALMAGSFAG), 1083–1103 (VWDYFFSFILILLTTCILAGI), 1111–1131 (FGLMFLCLILFCVSVVPLSYL), 1142–1162 (ATGAITAIHFAIGIIFVIISL), 1183–1203 (VDIVFCILSPLFAYSRILFLV), and 1227–1247 (GSPMIILAAHCIVWVSWIMIL). Positions 1293 to 1528 (LQFRNLHKLF…FGAGYTFDVK (236 aa)) constitute an ABC transporter 2 domain. 1331-1338 (GLNGAGKT) lines the ATP pocket.

It belongs to the ABC transporter superfamily. ABCA family.

The protein resides in the membrane. The polypeptide is ABC transporter A family member 2 (abcA2) (Dictyostelium discoideum (Social amoeba)).